The following is a 157-amino-acid chain: 2-C-methyl-D-erythritol 2,4-cyclodiphosphate synthase (157 aa).

Positions 8 and 10 each coordinate a divalent metal cation. 4-CDP-2-C-methyl-D-erythritol 2-phosphate contacts are provided by residues 8–10 (DVH) and 34–35 (HS). Histidine 42 serves as a coordination point for a divalent metal cation. 4-CDP-2-C-methyl-D-erythritol 2-phosphate is bound by residues 56–58 (DIG), 61–65 (FPDTD), 132–135 (TTEE), and phenylalanine 139.

It belongs to the IspF family. In terms of assembly, homotrimer. A divalent metal cation serves as cofactor.

It carries out the reaction 4-CDP-2-C-methyl-D-erythritol 2-phosphate = 2-C-methyl-D-erythritol 2,4-cyclic diphosphate + CMP. It participates in isoprenoid biosynthesis; isopentenyl diphosphate biosynthesis via DXP pathway; isopentenyl diphosphate from 1-deoxy-D-xylulose 5-phosphate: step 4/6. Involved in the biosynthesis of isopentenyl diphosphate (IPP) and dimethylallyl diphosphate (DMAPP), two major building blocks of isoprenoid compounds. Catalyzes the conversion of 4-diphosphocytidyl-2-C-methyl-D-erythritol 2-phosphate (CDP-ME2P) to 2-C-methyl-D-erythritol 2,4-cyclodiphosphate (ME-CPP) with a corresponding release of cytidine 5-monophosphate (CMP). This chain is 2-C-methyl-D-erythritol 2,4-cyclodiphosphate synthase, found in Clostridium botulinum (strain Eklund 17B / Type B).